The sequence spans 265 residues: Thymidine kinase 2, mitochondrial (265 aa).

The transit peptide at 1 to 33 (MLLWPLRGWAARALRCFGPGSRGSPASGPGPRR) directs the protein to the mitochondrion. Positions 20–32 (GSRGSPASGPGPR) are enriched in low complexity. The tract at residues 20-47 (GSRGSPASGPGPRRVQRRAWPPDKEQEK) is disordered. An ATP-binding site is contributed by 57–65 (GNIASGKTT). Glutamate 133 serves as the catalytic Proton acceptor.

Belongs to the DCK/DGK family. In terms of assembly, monomer. Predominantly expressed in liver, pancreas, muscle, and brain.

The protein resides in the mitochondrion. The enzyme catalyses thymidine + ATP = dTMP + ADP + H(+). It carries out the reaction 2'-deoxycytidine + ATP = dCMP + ADP + H(+). The catalysed reaction is 2'-deoxyuridine + ATP = dUMP + ADP + H(+). In terms of biological role, phosphorylates thymidine, deoxycytidine, and deoxyuridine in the mitochondrial matrix. In non-replicating cells, where cytosolic dNTP synthesis is down-regulated, mtDNA synthesis depends solely on TK2 and DGUOK. Widely used as target of antiviral and chemotherapeutic agents. This is Thymidine kinase 2, mitochondrial from Homo sapiens (Human).